Reading from the N-terminus, the 396-residue chain is Acetate kinase (396 aa).

Residue Asn-8 coordinates Mg(2+). Residue Lys-15 coordinates ATP. Arg-89 lines the substrate pocket. Asp-146 functions as the Proton donor/acceptor in the catalytic mechanism. ATP contacts are provided by residues 206 to 210 (HIGNG), 283 to 285 (DMR), and 331 to 335 (GVGEN). Mg(2+) is bound at residue Glu-383.

This sequence belongs to the acetokinase family. Homodimer. The cofactor is Mg(2+). Requires Mn(2+) as cofactor.

It localises to the cytoplasm. It catalyses the reaction acetate + ATP = acetyl phosphate + ADP. It functions in the pathway metabolic intermediate biosynthesis; acetyl-CoA biosynthesis; acetyl-CoA from acetate: step 1/2. Functionally, catalyzes the formation of acetyl phosphate from acetate and ATP. Can also catalyze the reverse reaction. In Streptococcus pneumoniae (strain JJA), this protein is Acetate kinase.